A 205-amino-acid polypeptide reads, in one-letter code: MPVVFVAASKLPTPFATFTMHGFLDEATGREHVVLSLGDIADGEPVLGRLHSECLTGDALFSQRCDCGSQLEAALQAIAREGRGVLLYLRQEGRGIGLLNKIRAYELQDGGADTVEANERLGFAADQRDYAICLPMLEHLGVKSLRLMTNNPRKVKALTDMNIKVAERVPLHTGHNPHNRYYLATKADKLGHMLGNEHQGEVPQA.

GTP is bound at residue Arg-49–Glu-53. Zn(2+) contacts are provided by Cys-54, Cys-65, and Cys-67. GTP is bound by residues Gln-70, Glu-92–Arg-94, and Thr-114. Asp-126 (proton acceptor) is an active-site residue. The active-site Nucleophile is the Arg-128. 2 residues coordinate GTP: Thr-149 and Lys-154.

The protein belongs to the GTP cyclohydrolase II family. It depends on Zn(2+) as a cofactor.

The catalysed reaction is GTP + 4 H2O = 2,5-diamino-6-hydroxy-4-(5-phosphoribosylamino)-pyrimidine + formate + 2 phosphate + 3 H(+). Its pathway is cofactor biosynthesis; riboflavin biosynthesis; 5-amino-6-(D-ribitylamino)uracil from GTP: step 1/4. Functionally, catalyzes the conversion of GTP to 2,5-diamino-6-ribosylamino-4(3H)-pyrimidinone 5'-phosphate (DARP), formate and pyrophosphate. This Pseudomonas putida (strain W619) protein is GTP cyclohydrolase-2.